The following is a 249-amino-acid chain: 5'-nucleotidase SurE (249 aa).

The a divalent metal cation site is built by Asp-8, Asp-9, Ser-39, and Asn-91.

This sequence belongs to the SurE nucleotidase family. A divalent metal cation serves as cofactor.

The protein localises to the cytoplasm. It carries out the reaction a ribonucleoside 5'-phosphate + H2O = a ribonucleoside + phosphate. Nucleotidase that shows phosphatase activity on nucleoside 5'-monophosphates. The sequence is that of 5'-nucleotidase SurE from Pseudomonas putida (strain W619).